Reading from the N-terminus, the 630-residue chain is Pentatricopeptide repeat-containing protein At2g03880, mitochondrial (630 aa).

The N-terminal 76 residues, 1 to 76, are a transit peptide targeting the mitochondrion; that stretch reads MKSVMSKIKL…LIKCCISNRA (76 aa). 11 PPR repeats span residues 60-94, 95-125, 126-160, 161-192, 193-223, 224-258, 259-289, 292-322, 323-357, 358-388, and 394-424; these read DSATYSELIKCCISNRAVHEGNLICRHLYFNGHRP, MMFLVNVLINMYVKFNLLNDAHQLFDQMPQR, NVISWTTMISAYSKCKIHQKALELLVLMLRDNVRP, NVYTYSSVLRSCNGMSDVRMLHCGIIKEGLES, DVFVRSALIDVFAKLGEPEDALSVFDEMVTG, DAIVWNSIIGGFAQNSRSDVALELFKRMKRAGFIA, EQATLTSVLRACTGLALLELGMQAHVHIVKY, DLILNNALVDMYCKCGSLEDALRVFNQMKER, DVITWSTMISGLAQNGYSQEALKLFERMKSSGTKP, NYITIVGVLFACSHAGLLEDGWYYFRSMKKL, and VREHYGCMIDLLGKAGKLDDAVKLLNEMECE. The tract at residues 429-504 is type E motif; sequence TWRTLLGACR…EPGCSWIEVN (76 aa). Residues 505 to 535 form a type E(+) motif region; it reads KQIHAFIIGDNSHPQIVEVSKKLNQLIHRLT. The segment at 536 to 630 is type DYW motif; the sequence is GIGYVPETNF…DGKCSCGDYW (95 aa).

It belongs to the PPR family. PCMP-H subfamily.

The protein resides in the mitochondrion. In Arabidopsis thaliana (Mouse-ear cress), this protein is Pentatricopeptide repeat-containing protein At2g03880, mitochondrial (PCMP-H44).